A 340-amino-acid polypeptide reads, in one-letter code: ATP-dependent 6-phosphofructokinase (340 aa).

Gly-11 contacts ATP. Residue 21–25 (RAVVR) participates in ADP binding. Residues 72–73 (RY) and 102–105 (GDGS) each bind ATP. Mg(2+) is bound at residue Asp-103. 125–127 (TID) is a binding site for substrate. Asp-127 functions as the Proton acceptor in the catalytic mechanism. Arg-154 lines the ADP pocket. Substrate-binding positions include Arg-162 and 169-171 (MGR). ADP-binding positions include 185–187 (GAD) and 213–215 (KHH). Substrate contacts are provided by residues Glu-222, Arg-244, and 250 to 253 (HLLR).

The protein belongs to the phosphofructokinase type A (PFKA) family. ATP-dependent PFK group I subfamily. Prokaryotic clade 'B1' sub-subfamily. Homotetramer. The cofactor is Mg(2+).

The protein localises to the cytoplasm. The catalysed reaction is beta-D-fructose 6-phosphate + ATP = beta-D-fructose 1,6-bisphosphate + ADP + H(+). Its pathway is carbohydrate degradation; glycolysis; D-glyceraldehyde 3-phosphate and glycerone phosphate from D-glucose: step 3/4. Allosterically activated by ADP and other diphosphonucleosides, and allosterically inhibited by phosphoenolpyruvate. Its function is as follows. Catalyzes the phosphorylation of D-fructose 6-phosphate to fructose 1,6-bisphosphate by ATP, the first committing step of glycolysis. This Streptococcus agalactiae serotype Ia (strain ATCC 27591 / A909 / CDC SS700) protein is ATP-dependent 6-phosphofructokinase.